The sequence spans 236 residues: UPF0502 protein Bamb_4889 (236 aa).

The protein belongs to the UPF0502 family.

The sequence is that of UPF0502 protein Bamb_4889 from Burkholderia ambifaria (strain ATCC BAA-244 / DSM 16087 / CCUG 44356 / LMG 19182 / AMMD) (Burkholderia cepacia (strain AMMD)).